The following is a 489-amino-acid chain: 3-octaprenyl-4-hydroxybenzoate carboxy-lyase (489 aa).

Residue asparagine 172 participates in Mn(2+) binding. Residues 175 to 177 (IYR), 189 to 191 (RWL), and 194 to 195 (RG) each bind prenylated FMN. Position 238 (glutamate 238) interacts with Mn(2+). Aspartate 287 functions as the Proton donor in the catalytic mechanism.

Belongs to the UbiD family. Homohexamer. Requires prenylated FMN as cofactor. Mn(2+) is required as a cofactor.

The protein resides in the cell membrane. It catalyses the reaction a 4-hydroxy-3-(all-trans-polyprenyl)benzoate + H(+) = a 2-(all-trans-polyprenyl)phenol + CO2. It participates in cofactor biosynthesis; ubiquinone biosynthesis. Catalyzes the decarboxylation of 3-octaprenyl-4-hydroxy benzoate to 2-octaprenylphenol, an intermediate step in ubiquinone biosynthesis. The protein is 3-octaprenyl-4-hydroxybenzoate carboxy-lyase of Klebsiella pneumoniae (strain 342).